Here is a 402-residue protein sequence, read N- to C-terminus: Putative polyketide beta-ketoacyl synthase 2 (402 aa).

Disordered stretches follow at residues 1–30 and 188–222; these read MTPV…WAPR and VEPR…FDRD. The Ketosynthase family 3 (KS3) domain occupies 1-400; sequence MTPVAVTGMG…GFNSALVVRA (400 aa). The segment covering 192 to 205 has biased composition (low complexity); it reads SAPGAGSPSSPAGG.

Belongs to the thiolase-like superfamily. Beta-ketoacyl-ACP synthases family.

The protein operates within antifungal biosynthesis; monensin biosynthesis. This Streptomyces virginiae (Streptomyces cinnamonensis) protein is Putative polyketide beta-ketoacyl synthase 2.